The sequence spans 467 residues: Probable amino acid permease 7 (467 aa).

The Cytoplasmic segment spans residues 1–29 (MDIKEDDESRVITPTELQLHDSVTARTGT). Residues 30–50 (LWTAVAHIITGVIGAGVLSLA) form a helical membrane-spanning segment. The Extracellular segment spans residues 51-58 (WATAELGW). The chain crosses the membrane as a helical span at residues 59 to 79 (IAGPAALIAFAGVTLLSAFLL). Residues 80-111 (SDCYRFPDPNNGPLRLNSYSQAVKLYLGKKNE) lie on the Cytoplasmic side of the membrane. A helical transmembrane segment spans residues 112–132 (IVCGVVVYISLFGCGIAYTIV). Topologically, residues 133 to 163 (IATCSRAIMKSNCYHRNGHNATCSYGDNNNY) are extracellular. 2 helical membrane-spanning segments follow: residues 164–184 (FMVL…FHNM) and 185–205 (VWLS…GIGL). Residues 206-231 (ALGKIIENRKIEGSIRGIPAENRGEK) are Extracellular-facing. Residues 232–252 (VWIVFQALGNIAFSYPFSIIL) traverse the membrane as a helical segment. At 253 to 274 (LEIQDTLRSPPAEKQTMKKAST) the chain is on the cytoplasmic side. Residues 275–295 (VAVFIQTFFFFCCGCFGYAAF) form a helical membrane-spanning segment. Residues 296–312 (GDSTPGNLLTGFGFYEP) lie on the Extracellular side of the membrane. Residues 313–333 (FWLVDFANACIVLHLVGGYQV) traverse the membrane as a helical segment. The Cytoplasmic portion of the chain corresponds to 334–383 (YSQPIFAAAERSLTKKYPENKFIARFYGFKLPLLRGETVRLNPMRMCLRT). 2 helical membrane passes run 384-404 (MYVL…EVLG) and 405-425 (VVGA…MCIL). Residues 426–443 (QKKIRSWTRPWLLLRGFS) are Cytoplasmic-facing. A helical membrane pass occupies residues 444–464 (FVCLLVCLLSLVGSIYGLVGA). The Extracellular portion of the chain corresponds to 465-467 (KFG).

The protein belongs to the amino acid/polyamine transporter 2 family. Amino acid/auxin permease (AAAP) (TC 2.A.18.2) subfamily.

It is found in the cell membrane. Amino acid-proton symporter. Stereospecific transporter with a broad specificity for neutral amino acids. In Arabidopsis thaliana (Mouse-ear cress), this protein is Probable amino acid permease 7 (AAP7).